The chain runs to 128 residues: Large ribosomal subunit protein bL12 (128 aa).

It belongs to the bacterial ribosomal protein bL12 family. Homodimer. Part of the ribosomal stalk of the 50S ribosomal subunit. Forms a multimeric L10(L12)X complex, where L10 forms an elongated spine to which 2 to 4 L12 dimers bind in a sequential fashion. Binds GTP-bound translation factors.

Its function is as follows. Forms part of the ribosomal stalk which helps the ribosome interact with GTP-bound translation factors. Is thus essential for accurate translation. The protein is Large ribosomal subunit protein bL12 of Desulfovibrio desulfuricans (strain ATCC 27774 / DSM 6949 / MB).